Here is a 514-residue protein sequence, read N- to C-terminus: MKQLTIYPGKLTLDELRQVYLQPVKITLDSQIFPAIERSVECVNAILAENRTAYGINTGFGLLASTRIEEDNLEKLQRSLVVSHAAGVGKALDDNMTRLIMVLKINSLSRGYSGIRLAVIQALIALVNAEIYPHIPCKGSVGASGDLAPLAHMSLLLLGEGQARYQGEWLPAKEALAKANLQPITLAAKEGLALLNGTQVSTAFALRGLFEAEDLLAAAIVCGSLSVEAALGSRKPFDARVHVVRGQQGQIDVAALYRHVLEESSELSDSHINCPKVQDPYSLRCQPQVMGACLTQLRHAADVILTEANAVSDNPLVFAEQGEVISGGNFHAEPVAMASDNLALVLAEIGALSERRIALLMDSHMSQLPPFLVENGGVNSGFMIAQVTAAALASENKALAHPASVDSLPTSANQEDHVSMAPAAGRRLWEMAENTRGILAIEWLSACQGIDFRNGLKSSPILEEARVILRAKVDYYDQDRFFAPDIDAAVKLLAEQHLSSLLPSGQILQRKNNR.

The 5-imidazolinone (Ala-Gly) cross-link spans 143–145; that stretch reads ASG. S144 carries the post-translational modification 2,3-didehydroalanine (Ser).

It belongs to the PAL/histidase family. Contains an active site 4-methylidene-imidazol-5-one (MIO), which is formed autocatalytically by cyclization and dehydration of residues Ala-Ser-Gly.

The protein localises to the cytoplasm. The enzyme catalyses L-histidine = trans-urocanate + NH4(+). Its pathway is amino-acid degradation; L-histidine degradation into L-glutamate; N-formimidoyl-L-glutamate from L-histidine: step 1/3. This chain is Histidine ammonia-lyase, found in Photorhabdus laumondii subsp. laumondii (strain DSM 15139 / CIP 105565 / TT01) (Photorhabdus luminescens subsp. laumondii).